The chain runs to 179 residues: Large ribosomal subunit protein uL5 (179 aa).

The protein belongs to the universal ribosomal protein uL5 family. As to quaternary structure, part of the 50S ribosomal subunit; part of the 5S rRNA/L5/L18/L25 subcomplex. Contacts the 5S rRNA and the P site tRNA. Forms a bridge to the 30S subunit in the 70S ribosome.

This is one of the proteins that bind and probably mediate the attachment of the 5S RNA into the large ribosomal subunit, where it forms part of the central protuberance. In the 70S ribosome it contacts protein S13 of the 30S subunit (bridge B1b), connecting the 2 subunits; this bridge is implicated in subunit movement. Contacts the P site tRNA; the 5S rRNA and some of its associated proteins might help stabilize positioning of ribosome-bound tRNAs. The protein is Large ribosomal subunit protein uL5 of Prochlorococcus marinus (strain MIT 9215).